The primary structure comprises 147 residues: Ribonuclease 4 (147 aa).

Residues 1-28 (MALQRTQAFLLLLLLTLLGLGLVQPSYG) form the signal peptide. The residue at position 29 (Gln29) is a Pyrrolidone carboxylic acid. Positions 35, 40, 68, 71, and 72 each coordinate dUMP. The active-site Proton acceptor is the His40. Cystine bridges form between Cys53–Cys109, Cys67–Cys120, Cys85–Cys135, and Cys92–Cys99. The active-site Proton donor is His144. Phe145 lines the dUMP pocket.

It belongs to the pancreatic ribonuclease family.

It localises to the secreted. Functionally, cleaves preferentially after uridine bases. Has antimicrobial activity against uropathogenic E.coli (UPEC). Probably contributes to urinary tract sterility. In Bos taurus (Bovine), this protein is Ribonuclease 4 (RNASE4).